A 472-amino-acid polypeptide reads, in one-letter code: Relaxin-3 receptor 1 (472 aa).

Over 1 to 81 (MQVASATPAA…ESTDTEARVR (81 aa)) the chain is Extracellular. N36 and N40 each carry an N-linked (GlcNAc...) asparagine glycan. A helical transmembrane segment spans residues 82–102 (ILISAVYWVVCALGLAGNLLV). At 103–119 (LYLMKSKQGWRKSSINL) the chain is on the cytoplasmic side. Residues 120-140 (FVTNLALTDFQFVLTLPFWAV) form a helical membrane-spanning segment. The Extracellular segment spans residues 141-156 (ENALDFKWPFGKAMCK). An intrachain disulfide couples C155 to C247. Residues 157–177 (IVSMVTSMNMYASVFFLTAMS) traverse the membrane as a helical segment. Over 178 to 215 (VARYHSVASALKSHRTRGRGRGDCCGQSLRESCCFSAK) the chain is Cytoplasmic. A helical membrane pass occupies residues 216 to 236 (VLCGLIWASAALASLPNAIFS). Topologically, residues 237-270 (TTIRVLGEELCLMHFPDKLLGWDRQFWLGLYHLQ) are extracellular. A helical transmembrane segment spans residues 271-291 (KVLLGFLLPLSIISLCYLLLV). Topologically, residues 292–298 (RFISDRR) are cytoplasmic. The chain crosses the membrane as a helical span at residues 299 to 319 (VVGTTDAVGAAAAPGGGLSTA). At 320-332 (SARRRSKVTKSVT) the chain is on the extracellular side. Residues 333–353 (IVVLSFFLCWLPNQALTTWSI) form a helical membrane-spanning segment. At 354–472 (LIKFNAVPFS…YDLLPSSSAY (119 aa)) the chain is on the cytoplasmic side.

It belongs to the G-protein coupled receptor 1 family.

Its subcellular location is the cell membrane. In terms of biological role, receptor for RNL3/relaxin-3. Binding of the ligand inhibit cAMP accumulation. The chain is Relaxin-3 receptor 1 (Rxfp3) from Mus musculus (Mouse).